Reading from the N-terminus, the 141-residue chain is Ribonuclease P protein component (141 aa).

The protein belongs to the RnpA family. In terms of assembly, consists of a catalytic RNA component (M1 or rnpB) and a protein subunit.

The enzyme catalyses Endonucleolytic cleavage of RNA, removing 5'-extranucleotides from tRNA precursor.. In terms of biological role, RNaseP catalyzes the removal of the 5'-leader sequence from pre-tRNA to produce the mature 5'-terminus. It can also cleave other RNA substrates such as 4.5S RNA. The protein component plays an auxiliary but essential role in vivo by binding to the 5'-leader sequence and broadening the substrate specificity of the ribozyme. This is Ribonuclease P protein component from Onion yellows phytoplasma (strain OY-M).